A 196-amino-acid chain; its full sequence is Holliday junction branch migration complex subunit RuvA (196 aa).

A domain I region spans residues 1-63 (MIASVRGEVL…EDSMTLYGFP (63 aa)). The segment at 64-138 (DGETRDLFLT…DKVGVAATGG (75 aa)) is domain II. A flexible linker region spans residues 138–142 (GALST). The segment at 143-196 (NGHAVRSPVVEALVGLGFAAKQAEEATDTVLAANHDATTSSALRSALSLLGKAR) is domain III.

It belongs to the RuvA family. As to quaternary structure, homotetramer. Forms an RuvA(8)-RuvB(12)-Holliday junction (HJ) complex. HJ DNA is sandwiched between 2 RuvA tetramers; dsDNA enters through RuvA and exits via RuvB. An RuvB hexamer assembles on each DNA strand where it exits the tetramer. Each RuvB hexamer is contacted by two RuvA subunits (via domain III) on 2 adjacent RuvB subunits; this complex drives branch migration. In the full resolvosome a probable DNA-RuvA(4)-RuvB(12)-RuvC(2) complex forms which resolves the HJ.

The protein resides in the cytoplasm. The RuvA-RuvB-RuvC complex processes Holliday junction (HJ) DNA during genetic recombination and DNA repair, while the RuvA-RuvB complex plays an important role in the rescue of blocked DNA replication forks via replication fork reversal (RFR). RuvA specifically binds to HJ cruciform DNA, conferring on it an open structure. The RuvB hexamer acts as an ATP-dependent pump, pulling dsDNA into and through the RuvAB complex. HJ branch migration allows RuvC to scan DNA until it finds its consensus sequence, where it cleaves and resolves the cruciform DNA. The protein is Holliday junction branch migration complex subunit RuvA of Mycobacterium bovis (strain ATCC BAA-935 / AF2122/97).